The chain runs to 85 residues: Beta-insect depressant toxin BmKITa (85 aa).

A signal peptide spans 1 to 21; the sequence is MKLFLLLLISASMLIDGLVNA. Positions 22–82 constitute an LCN-type CS-alpha/beta domain; that stretch reads DGYIRGSNGC…TWKSESNTCG (61 aa). 4 cysteine pairs are disulfide-bonded: Cys31-Cys81, Cys35-Cys56, Cys42-Cys63, and Cys46-Cys65. At Gly82 the chain carries Glycine amide.

Expressed by the venom gland.

The protein resides in the secreted. Functionally, depressant insect beta-toxins cause a transient contraction paralysis followed by a slow flaccid paralysis. They bind voltage-independently at site-4 of sodium channels (Nav) and shift the voltage of activation toward more negative potentials thereby affecting sodium channel activation and promoting spontaneous and repetitive firing. This toxin also displays an evident analgesic effect but is devoid of any toxicity on mice. This chain is Beta-insect depressant toxin BmKITa, found in Olivierus martensii (Manchurian scorpion).